Reading from the N-terminus, the 162-residue chain is Protein A49 (162 aa).

The protein belongs to the poxviridae A49 protein family.

This is Protein A49 from Variola virus (isolate Human/India/Ind3/1967) (VARV).